An 885-amino-acid chain; its full sequence is MNPTLSRGGAPSRFVRGRGRGGGAYRPYFYFRRNGRVIPAGGNRQPNQGEPGAPDAPSVPPATRQPRGWSRTAGKRGRNAHLDCSFLRPENYAAPEDGLQVQSIAVDNPRAYSGWRLYFLREKYEEGNELATRIMAVEAYYQRNPHTFDFVMIRDRGFFPLCAAGIKSDAQLKEVWPSLSEDIREHPLRTLGTLSLAMHTVVVNHQLDCNDSTTAMVSTPEQYVLPTPRVRKIYARPDDFVPVESIEGISHSRVDTLFSIRGFVSNVGEPSYSLTWQAFRCSRCQMEIAMRQRGTFQPRPYQCKRSECVARDEFVPLRSSPYTRLSIRQIIRVEESSLNLVHDFETSMPAEMDVELRHDLVDAVRVGQEVVVTGILKLQELGDDTTTGDTSNQMQPYLKAVSIRDASSIKREFSERDLEAIVMINAEPNSFKLLVQSIAPEVYGHELPKAACLLSLLGGKGAETEAINVLLVGDPGIGKTKILQSCAQIAERGAHVSGKRGAQSAQQLGVTFAGRNKRVLQAGSLMMASGGGHCTLDDVDKLASKQAVLLQCLQSEEVNLPLAGAFASFPAQPSVIACANPQRGQYDEGRYLLQNINISPSLLREFHLVYILLDKPSERDMSLTAHVRALHAGARKRARIAARYALKPKMSDSMCEVSLNVPAAGKDDDTIKTEDDNDSIMQQDYDLDKRLEVLPEEGDLDLLPPILIKKFLSYARQELNPVLNEDASNAVLRYFLELKGSCNLDEDVSSQIGAGQLLAIIHLSQARARLDLSHVVSPQHVRDVIALLTESITQTSLKEGSSRQGTRGGGGAGGGAGKSAQLRNFLELTKRRSAALGRRIFEFDELKEIGTRAGILTGFSQLVEMANLGGYLLMKGANMYEVVPD.

Positions 36–76 (RVIPAGGNRQPNQGEPGAPDAPSVPPATRQPRGWSRTAGKR) are disordered. The segment at 281-308 (CSRCQMEIAMRQRGTFQPRPYQCKRSEC) adopts a C4-type zinc-finger fold. Residues 430 to 627 (SFKLLVQSIA…ERDMSLTAHV (198 aa)) enclose the MCM domain. 473–480 (GDPGIGKT) is an ATP binding site. The segment covering 796 to 805 (SLKEGSSRQG) has biased composition (polar residues). Residues 796–818 (SLKEGSSRQGTRGGGGAGGGAGK) are disordered. The segment covering 806-817 (TRGGGGAGGGAG) has biased composition (gly residues).

It belongs to the MCM family.

Its subcellular location is the nucleus. Required for meiotic DNA recombination in females. Probably not involved in DNA repair and recombination in somatic cells. The chain is DNA replication licensing factor REC (rec) from Drosophila melanogaster (Fruit fly).